Consider the following 306-residue polypeptide: Foldase protein PrsA (306 aa).

An N-terminal signal peptide occupies residues 1–20; it reads MRRKIALFLALIFVGVSLVS. A lipid anchor (N-palmitoyl cysteine) is attached at C21. The S-diacylglycerol cysteine moiety is linked to residue C21. Positions 165-255 constitute a PpiC domain; that stretch reads FEVMRARHIL…YGYHIIKSEG (91 aa).

The protein belongs to the PrsA family.

The protein resides in the cell membrane. The catalysed reaction is [protein]-peptidylproline (omega=180) = [protein]-peptidylproline (omega=0). Functionally, plays a major role in protein secretion by helping the post-translocational extracellular folding of several secreted proteins. This Caldanaerobacter subterraneus subsp. tengcongensis (strain DSM 15242 / JCM 11007 / NBRC 100824 / MB4) (Thermoanaerobacter tengcongensis) protein is Foldase protein PrsA.